A 210-amino-acid chain; its full sequence is Probable membrane protein Rv1733c (210 aa).

A run of 2 helical transmembrane segments spans residues 43-63 and 165-185; these read AVVMLLAVTVSLLTIPFAAAA and ALAALGLWLSVAAVAGALLAL.

The protein localises to the cell membrane. The polypeptide is Probable membrane protein Rv1733c (Mycobacterium tuberculosis (strain ATCC 25618 / H37Rv)).